A 173-amino-acid polypeptide reads, in one-letter code: Putative metal-dependent hydrolase OB0413 (173 aa).

Zn(2+)-binding residues include H64, H155, and H159.

The protein belongs to the metal hydrolase YfiT family. As to quaternary structure, homodimer. Zn(2+) serves as cofactor.

It is found in the cytoplasm. Possible metal-dependent hydrolase. In Oceanobacillus iheyensis (strain DSM 14371 / CIP 107618 / JCM 11309 / KCTC 3954 / HTE831), this protein is Putative metal-dependent hydrolase OB0413.